The primary structure comprises 89 residues: Acylphosphatase (89 aa).

The region spanning 4-89 (CVRCLIAGRV…IPEIQMFEVR (86 aa)) is the Acylphosphatase-like domain. Residues Arg-19 and Asn-37 contribute to the active site.

The protein belongs to the acylphosphatase family.

The enzyme catalyses an acyl phosphate + H2O = a carboxylate + phosphate + H(+). The protein is Acylphosphatase (acyP) of Nitrosococcus oceani (strain ATCC 19707 / BCRC 17464 / JCM 30415 / NCIMB 11848 / C-107).